Reading from the N-terminus, the 355-residue chain is Uroporphyrinogen decarboxylase (355 aa).

Substrate-binding positions include 27–31 (RQAGR), Asp78, Tyr155, Ser210, and His328.

This sequence belongs to the uroporphyrinogen decarboxylase family. As to quaternary structure, homodimer.

The protein localises to the cytoplasm. It carries out the reaction uroporphyrinogen III + 4 H(+) = coproporphyrinogen III + 4 CO2. The protein operates within porphyrin-containing compound metabolism; protoporphyrin-IX biosynthesis; coproporphyrinogen-III from 5-aminolevulinate: step 4/4. Its function is as follows. Catalyzes the decarboxylation of four acetate groups of uroporphyrinogen-III to yield coproporphyrinogen-III. The protein is Uroporphyrinogen decarboxylase of Pseudomonas aeruginosa (strain UCBPP-PA14).